We begin with the raw amino-acid sequence, 189 residues long: MSSLSLYTVQAVLILDQQGERIYAKYYQPPHRSDEGHQLLFNSVKKQKEFEKQLYRKTHKQDSEILIFEDHLVLYKEYIDITIYLVASLEENEIVLQQGFSAIRGALDLILNSGMDKKNIQENYDMVLLAIDETIDNGVILETDSNTIASRVSKPPTNEPQMALDLDKGFLGAWGFAKSKFQERLQQGL.

This sequence belongs to the adaptor complexes small subunit family. Oligomeric complex that consists of at least the alpha, beta, beta', gamma, delta, epsilon and zeta subunits.

It localises to the cytoplasm. Its subcellular location is the golgi apparatus membrane. The protein localises to the cytoplasmic vesicle. The protein resides in the COPI-coated vesicle membrane. Its function is as follows. The coatomer is a cytosolic protein complex that binds to dilysine motifs and reversibly associates with Golgi non-clathrin-coated vesicles, which further mediate biosynthetic protein transport from the ER, via the Golgi up to the trans Golgi network. Coatomer complex is required for budding from Golgi membranes, and is essential for the retrograde Golgi-to-ER transport of dilysine-tagged proteins. The zeta subunit may be involved in regulating the coat assembly and, hence, the rate of biosynthetic protein transport due to its association-dissociation properties with the coatomer complex. This is Coatomer subunit zeta (RET3) from Saccharomyces cerevisiae (strain ATCC 204508 / S288c) (Baker's yeast).